We begin with the raw amino-acid sequence, 394 residues long: RHOMBOID-like protein 4 (394 aa).

Residues 1–51 (MGEKDSETAPIWGKTRERERSNNNNIQPMDLESSSSVSGQQRSLTQSRSSY) are disordered. Over residues 39–49 (GQQRSLTQSRS) the composition is skewed to polar residues. 7 helical membrane-spanning segments follow: residues 64 to 84 (WFPW…VITM), 147 to 167 (WLHG…FIGI), 175 to 195 (FIRI…LSAL), 201 to 221 (ISVG…SEIF), 231 to 251 (VVTI…GVLP), 254 to 274 (DNFA…VLLI), and 300 to 320 (ILWT…LISL). Ser206 (nucleophile) is an active-site residue. His258 functions as the Charge relay system in the catalytic mechanism.

It belongs to the peptidase S54 family.

It localises to the membrane. It carries out the reaction Cleaves type-1 transmembrane domains using a catalytic dyad composed of serine and histidine that are contributed by different transmembrane domains.. Probable rhomboid-type serine protease that catalyzes intramembrane proteolysis. The polypeptide is RHOMBOID-like protein 4 (Arabidopsis thaliana (Mouse-ear cress)).